The sequence spans 216 residues: MYKGIFVTATDTEVGKTYVSCKIAETLEKSGINTGVFKPVSTGNRNDAKALIKAAKIDENTETVTPVFFKNPMSPYGASLLERRASDKIFDLKKINNAFKYFLNKYEFTVVEGVGGILVPLKQNFFVSDLIKKFNLPVIVVARFGLGTLNHTLLTVEKLKRDRQKILGVILSGKKNNNDVSVKSNALIIKKITNLSVLELGYNEKIDLEKNIWIIK.

E13–Y18 lines the ATP pocket. T17 is a Mg(2+) binding site. Residue K38 is part of the active site. T42 provides a ligand contact to substrate. ATP-binding positions include D47 and E112–G115. Residues D47 and E112 each coordinate Mg(2+).

The protein belongs to the dethiobiotin synthetase family. In terms of assembly, homodimer. It depends on Mg(2+) as a cofactor.

The protein localises to the cytoplasm. It carries out the reaction (7R,8S)-7,8-diammoniononanoate + CO2 + ATP = (4R,5S)-dethiobiotin + ADP + phosphate + 3 H(+). It functions in the pathway cofactor biosynthesis; biotin biosynthesis; biotin from 7,8-diaminononanoate: step 1/2. Functionally, catalyzes a mechanistically unusual reaction, the ATP-dependent insertion of CO2 between the N7 and N8 nitrogen atoms of 7,8-diaminopelargonic acid (DAPA, also called 7,8-diammoniononanoate) to form a ureido ring. The protein is ATP-dependent dethiobiotin synthetase BioD of Endomicrobium trichonymphae.